The primary structure comprises 322 residues: Ribose-phosphate pyrophosphokinase (322 aa).

ATP contacts are provided by residues 43 to 45 and 102 to 103; these read DGE and RQ. Residues histidine 137 and aspartate 177 each coordinate Mg(2+). Lysine 201 is an active-site residue. Residues arginine 203, aspartate 227, and 231-235 contribute to the D-ribose 5-phosphate site; that span reads DTAGT.

The protein belongs to the ribose-phosphate pyrophosphokinase family. Class I subfamily. Homohexamer. Mg(2+) serves as cofactor.

It localises to the cytoplasm. The catalysed reaction is D-ribose 5-phosphate + ATP = 5-phospho-alpha-D-ribose 1-diphosphate + AMP + H(+). It participates in metabolic intermediate biosynthesis; 5-phospho-alpha-D-ribose 1-diphosphate biosynthesis; 5-phospho-alpha-D-ribose 1-diphosphate from D-ribose 5-phosphate (route I): step 1/1. Its function is as follows. Involved in the biosynthesis of the central metabolite phospho-alpha-D-ribosyl-1-pyrophosphate (PRPP) via the transfer of pyrophosphoryl group from ATP to 1-hydroxyl of ribose-5-phosphate (Rib-5-P). In Xylella fastidiosa (strain Temecula1 / ATCC 700964), this protein is Ribose-phosphate pyrophosphokinase.